A 765-amino-acid chain; its full sequence is Cyanobacterial phytochrome A (765 aa).

The chromophore binding domain stretch occupies residues 20–510; the sequence is IHLSGQIQPH…RKAIVNIVLR (491 aa). The GAF domain occupies 152-320; that stretch reads NLRDFCQIIV…VIFAEISARE (169 aa). Cys259 is a binding site for a tetrapyrrole. Residues 535-748 form the Histidine kinase domain; it reads VASHDLQEPL…TFYFTIPVGG (214 aa). His538 bears the Phosphohistidine; by autocatalysis mark.

This sequence in the N-terminal section; belongs to the phytochrome family. In terms of processing, contains one covalently linked tetrapyrrole chromophore.

The enzyme catalyses ATP + protein L-histidine = ADP + protein N-phospho-L-histidine.. Functionally, photoreceptor which exists in two forms that are reversibly interconvertible by light: the R form that absorbs maximally in the red region of the spectrum and the FR form that absorbs maximally in the far-red region. The sequence is that of Cyanobacterial phytochrome A (aphA) from Nostoc sp. (strain PCC 7120 / SAG 25.82 / UTEX 2576).